The primary structure comprises 217 residues: Ras-related protein RABA2c (217 aa).

Residues 19–27, 38–44, 67–71, 125–128, and 155–157 contribute to the GTP site; these read GDSGVGKSN, CLESKST, DTAGQ, NKSD, and SAL. Positions 41-49 match the Effector region motif; that stretch reads SKSTIGVEF. The disordered stretch occupies residues 195–217; sequence PGQGTTINVDDTSGGAKRACCSS. S-geranylgeranyl cysteine attachment occurs at residues Cys214 and Cys215.

The protein belongs to the small GTPase superfamily. Rab family. Expressed in root tips.

It is found in the endosome membrane. The protein resides in the golgi apparatus. It localises to the trans-Golgi network membrane. Functionally, intracellular vesicle trafficking and protein transport. In Arabidopsis thaliana (Mouse-ear cress), this protein is Ras-related protein RABA2c (RABA2C).